The primary structure comprises 94 residues: DNA-binding protein HU (94 aa).

It belongs to the bacterial histone-like protein family.

Functionally, histone-like DNA-binding protein which is capable of wrapping DNA to stabilize it, and thus to prevent its denaturation under extreme environmental conditions. The sequence is that of DNA-binding protein HU (hup) from Xylella fastidiosa (strain 9a5c).